We begin with the raw amino-acid sequence, 874 residues long: Alanine--tRNA ligase (874 aa).

H562, H566, C663, and H667 together coordinate Zn(2+).

Belongs to the class-II aminoacyl-tRNA synthetase family. Requires Zn(2+) as cofactor.

It is found in the cytoplasm. The catalysed reaction is tRNA(Ala) + L-alanine + ATP = L-alanyl-tRNA(Ala) + AMP + diphosphate. Its function is as follows. Catalyzes the attachment of alanine to tRNA(Ala) in a two-step reaction: alanine is first activated by ATP to form Ala-AMP and then transferred to the acceptor end of tRNA(Ala). Also edits incorrectly charged Ser-tRNA(Ala) and Gly-tRNA(Ala) via its editing domain. This is Alanine--tRNA ligase from Bordetella parapertussis (strain 12822 / ATCC BAA-587 / NCTC 13253).